The sequence spans 408 residues: Probable cysteine desulfurase (408 aa).

K225 carries the post-translational modification N6-(pyridoxal phosphate)lysine.

This sequence belongs to the class-V pyridoxal-phosphate-dependent aminotransferase family. Csd subfamily. Requires pyridoxal 5'-phosphate as cofactor.

The enzyme catalyses (sulfur carrier)-H + L-cysteine = (sulfur carrier)-SH + L-alanine. Its function is as follows. Catalyzes the removal of elemental sulfur and selenium atoms from L-cysteine, L-cystine, L-selenocysteine, and L-selenocystine to produce L-alanine. The chain is Probable cysteine desulfurase (csd) from Mycoplasma genitalium (strain ATCC 33530 / DSM 19775 / NCTC 10195 / G37) (Mycoplasmoides genitalium).